We begin with the raw amino-acid sequence, 110 residues long: MRKFFVILMVALVVVLTASAVFAADSDPAKLNYYGYATAGALIGLGAAAGGGGAGMGQGLRGILEGSARNPGVTGKLMTLFIVGLALIESLVIYVLVFVLITFYANPFVK.

The next 3 helical transmembrane spans lie at 4-24 (FFVILMVALVVVLTASAVFAA), 37-57 (ATAGALIGLGAAAGGGGAGMG), and 81-101 (FIVGLALIESLVIYVLVFVLI).

This sequence belongs to the ATPase C chain family. In terms of assembly, F-type ATPases have 2 components, F(1) - the catalytic core - and F(0) - the membrane proton channel. F(1) has five subunits: alpha(3), beta(3), gamma(1), delta(1), epsilon(1). F(0) has three main subunits: a(1), b(2) and c(10-14). The alpha and beta chains form an alternating ring which encloses part of the gamma chain. F(1) is attached to F(0) by a central stalk formed by the gamma and epsilon chains, while a peripheral stalk is formed by the delta and b chains.

The protein localises to the cell inner membrane. F(1)F(0) ATP synthase produces ATP from ADP in the presence of a proton or sodium gradient. F-type ATPases consist of two structural domains, F(1) containing the extramembraneous catalytic core and F(0) containing the membrane proton channel, linked together by a central stalk and a peripheral stalk. During catalysis, ATP synthesis in the catalytic domain of F(1) is coupled via a rotary mechanism of the central stalk subunits to proton translocation. Functionally, key component of the F(0) channel; it plays a direct role in translocation across the membrane. A homomeric c-ring of between 10-14 subunits forms the central stalk rotor element with the F(1) delta and epsilon subunits. This chain is ATP synthase subunit c, found in Thermodesulfovibrio yellowstonii (strain ATCC 51303 / DSM 11347 / YP87).